A 381-amino-acid chain; its full sequence is Alkanesulfonate monooxygenase (381 aa).

Belongs to the SsuD family. In terms of assembly, homotetramer.

The enzyme catalyses an alkanesulfonate + FMNH2 + O2 = an aldehyde + FMN + sulfite + H2O + 2 H(+). Functionally, catalyzes the desulfonation of aliphatic sulfonates. The protein is Alkanesulfonate monooxygenase of Escherichia coli O81 (strain ED1a).